Here is a 376-residue protein sequence, read N- to C-terminus: 26S proteasome non-ATPase regulatory subunit 13 (376 aa).

In terms of domain architecture, PCI spans 171-338 (SYYKDALRFL…KRVHMTWVQP (168 aa)). The residue at position 298 (Lys298) is an N6-acetyllysine.

It belongs to the proteasome subunit S11 family. As to quaternary structure, component of the 19S proteasome regulatory particle complex. The 26S proteasome consists of a 20S core particle (CP) and two 19S regulatory subunits (RP). The regulatory particle is made of a lid composed of 9 subunits including PSMD13, a base containing 6 ATPases and few additional components.

Component of the 26S proteasome, a multiprotein complex involved in the ATP-dependent degradation of ubiquitinated proteins. This complex plays a key role in the maintenance of protein homeostasis by removing misfolded or damaged proteins, which could impair cellular functions, and by removing proteins whose functions are no longer required. Therefore, the proteasome participates in numerous cellular processes, including cell cycle progression, apoptosis, or DNA damage repair. The chain is 26S proteasome non-ATPase regulatory subunit 13 from Rattus norvegicus (Rat).